The primary structure comprises 390 residues: Phosphoglycerate kinase (390 aa).

Substrate-binding positions include aspartate 21–asparagine 23, arginine 36, histidine 59–arginine 62, arginine 114, and arginine 147. Residues lysine 198, glutamate 314, and glycine 340–threonine 343 contribute to the ATP site.

This sequence belongs to the phosphoglycerate kinase family. In terms of assembly, monomer.

The protein localises to the cytoplasm. It catalyses the reaction (2R)-3-phosphoglycerate + ATP = (2R)-3-phospho-glyceroyl phosphate + ADP. It participates in carbohydrate degradation; glycolysis; pyruvate from D-glyceraldehyde 3-phosphate: step 2/5. The chain is Phosphoglycerate kinase from Buchnera aphidicola subsp. Acyrthosiphon pisum (strain 5A).